A 94-amino-acid chain; its full sequence is ATP-dependent Clp protease adapter protein ClpS (94 aa).

This sequence belongs to the ClpS family. Binds to the N-terminal domain of the chaperone ClpA.

Involved in the modulation of the specificity of the ClpAP-mediated ATP-dependent protein degradation. In Thermosynechococcus vestitus (strain NIES-2133 / IAM M-273 / BP-1), this protein is ATP-dependent Clp protease adapter protein ClpS.